A 73-amino-acid polypeptide reads, in one-letter code: Probable cytochrome b-c1 complex subunit 8 (73 aa).

The Mitochondrial matrix segment spans residues 1–42 (MGQASKVFGKQITYSVSPFQQKLFVNYFKNAIPHLRRGVKDN). Residues 43 to 60 (FFCSVPYFAALYITVNWA) form a helical membrane-spanning segment. Residues 61–73 (NETYHNEMKDHWY) lie on the Mitochondrial intermembrane side of the membrane.

Belongs to the UQCRQ/QCR8 family. As to quaternary structure, component of the ubiquinol-cytochrome c oxidoreductase (cytochrome b-c1 complex, complex III, CIII), a multisubunit enzyme composed of 3 respiratory subunits cytochrome b, cytochrome c1 and Rieske protein, 2 core protein subunits, and additional low-molecular weight protein subunits. The complex exists as an obligatory dimer and forms supercomplexes (SCs) in the inner mitochondrial membrane with cytochrome c oxidase (complex IV, CIV).

Its subcellular location is the mitochondrion inner membrane. Component of the ubiquinol-cytochrome c oxidoreductase, a multisubunit transmembrane complex that is part of the mitochondrial electron transport chain which drives oxidative phosphorylation. The respiratory chain contains 3 multisubunit complexes succinate dehydrogenase (complex II, CII), ubiquinol-cytochrome c oxidoreductase (cytochrome b-c1 complex, complex III, CIII) and cytochrome c oxidase (complex IV, CIV), that cooperate to transfer electrons derived from NADH and succinate to molecular oxygen, creating an electrochemical gradient over the inner membrane that drives transmembrane transport and the ATP synthase. The cytochrome b-c1 complex catalyzes electron transfer from ubiquinol to cytochrome c, linking this redox reaction to translocation of protons across the mitochondrial inner membrane, with protons being carried across the membrane as hydrogens on the quinol. In the process called Q cycle, 2 protons are consumed from the matrix, 4 protons are released into the intermembrane space and 2 electrons are passed to cytochrome c. This is Probable cytochrome b-c1 complex subunit 8 from Dictyostelium discoideum (Social amoeba).